The primary structure comprises 188 residues: Peptidyl-tRNA hydrolase (188 aa).

Phenylalanine 15 contacts tRNA. Histidine 20 (proton acceptor) is an active-site residue. TRNA-binding residues include tyrosine 64, asparagine 66, and asparagine 112.

This sequence belongs to the PTH family. As to quaternary structure, monomer.

It localises to the cytoplasm. It carries out the reaction an N-acyl-L-alpha-aminoacyl-tRNA + H2O = an N-acyl-L-amino acid + a tRNA + H(+). Functionally, hydrolyzes ribosome-free peptidyl-tRNAs (with 1 or more amino acids incorporated), which drop off the ribosome during protein synthesis, or as a result of ribosome stalling. In terms of biological role, catalyzes the release of premature peptidyl moieties from peptidyl-tRNA molecules trapped in stalled 50S ribosomal subunits, and thus maintains levels of free tRNAs and 50S ribosomes. This is Peptidyl-tRNA hydrolase from Borreliella burgdorferi (strain ATCC 35210 / DSM 4680 / CIP 102532 / B31) (Borrelia burgdorferi).